Reading from the N-terminus, the 397-residue chain is Protein Brevis radix-like 1 (397 aa).

Disordered regions lie at residues 14–37 (GAPP…AGEC) and 105–148 (RAGS…EDDE). Positions 124–148 (AGDEEEEEEEEEEEGTTADGSEDDE) are enriched in acidic residues. One can recognise a BRX 1 domain in the interval 150–205 (KEWVAQVEPGVLITFLSLPEGGNDLKRIRFSREIFNKWQAQRWWAENYEKVMELYN). Disordered stretches follow at residues 212–278 (QTPL…QQHH) and 300–342 (SISG…DQER). Basic and acidic residues predominate over residues 220–230 (KSEDESLKEDI). The segment covering 309–320 (SSMDASMRSSSS) has biased composition (low complexity). Residues 342 to 397 (REWVEEDEPGVYITIRALPGGIRELRRVRFSREKFSEMHARLWWEENRARIHDQYL) form the BRX 2 domain.

It belongs to the BRX family.

Its subcellular location is the nucleus. The sequence is that of Protein Brevis radix-like 1 (BRXL1) from Oryza sativa subsp. japonica (Rice).